A 722-amino-acid polypeptide reads, in one-letter code: Phenylalanine ammonia-lyase lenB (722 aa).

Y83 (proton donor/acceptor) is an active-site residue. The segment at L117–S136 is disordered. Residues A190–G192 constitute a cross-link (5-imidazolinone (Ala-Gly)). Position 191 is a 2,3-didehydroalanine (Ser) (S191). The (E)-cinnamate site is built by N247, Q334, R340, N370, K441, E469, and N472.

It belongs to the PAL/histidase family. Post-translationally, contains an active site 4-methylidene-imidazol-5-one (MIO), which is formed autocatalytically by cyclization and dehydration of residues Ala-Ser-Gly.

The catalysed reaction is L-phenylalanine = (E)-cinnamate + NH4(+). It functions in the pathway alkaloid biosynthesis. Its function is as follows. Phenylalanine ammonia-lyase; part of the gene cluster that mediates the biosynthesis of the ergot alkaloids lentopeptins A and B. Within the pathway, lenB provides the cinnamic acid starter unit for the synthesis of the N-acyldiketopiperazine intermediate by the NRPS lenA. Cinnamic acid is condensed with the Ala-Val-Ala peptide chain by lenA which leads to the N-acyldiketopiperazine intermediate which in turn is converted into lentopeptins A and B by the cytochrome P450 monooxygenase lenC. This chain is Phenylalanine ammonia-lyase lenB, found in Aspergillus lentulus.